The chain runs to 307 residues: tRNA-cytidine(32) 2-sulfurtransferase (307 aa).

The PP-loop motif signature appears at 44 to 49 (SGGKDS). [4Fe-4S] cluster is bound by residues C119, C122, and C210.

It belongs to the TtcA family. As to quaternary structure, homodimer. Mg(2+) is required as a cofactor. [4Fe-4S] cluster serves as cofactor.

It is found in the cytoplasm. It catalyses the reaction cytidine(32) in tRNA + S-sulfanyl-L-cysteinyl-[cysteine desulfurase] + AH2 + ATP = 2-thiocytidine(32) in tRNA + L-cysteinyl-[cysteine desulfurase] + A + AMP + diphosphate + H(+). It participates in tRNA modification. Functionally, catalyzes the ATP-dependent 2-thiolation of cytidine in position 32 of tRNA, to form 2-thiocytidine (s(2)C32). The sulfur atoms are provided by the cysteine/cysteine desulfurase (IscS) system. This chain is tRNA-cytidine(32) 2-sulfurtransferase, found in Aliivibrio salmonicida (strain LFI1238) (Vibrio salmonicida (strain LFI1238)).